Consider the following 201-residue polypeptide: Small ribosomal subunit protein uS4 (201 aa).

Residues 19-41 (LVGGSSAYEKRPYPPGQHGRARI) form a disordered region. The region spanning 91–157 (SRLDNVVYRA…LPFEVARETA (67 aa)) is the S4 RNA-binding domain.

It belongs to the universal ribosomal protein uS4 family. In terms of assembly, part of the 30S ribosomal subunit. Contacts protein S5. The interaction surface between S4 and S5 is involved in control of translational fidelity.

Its function is as follows. One of the primary rRNA binding proteins, it binds directly to 16S rRNA where it nucleates assembly of the body of the 30S subunit. In terms of biological role, with S5 and S12 plays an important role in translational accuracy. The protein is Small ribosomal subunit protein uS4 of Mycobacteroides abscessus (strain ATCC 19977 / DSM 44196 / CCUG 20993 / CIP 104536 / JCM 13569 / NCTC 13031 / TMC 1543 / L948) (Mycobacterium abscessus).